The sequence spans 266 residues: UPF0354 protein Lm4b_01619 (266 aa).

Belongs to the UPF0354 family.

The sequence is that of UPF0354 protein Lm4b_01619 from Listeria monocytogenes serotype 4b (strain CLIP80459).